The sequence spans 323 residues: Probable proline iminopeptidase (323 aa).

Residues 37-301 (VVLHGGPGSR…VIVDEAGHDA (265 aa)) form the AB hydrolase-1 domain. S114 serves as the catalytic Nucleophile. Residue D271 is part of the active site. Residue H299 is the Proton donor of the active site.

The protein belongs to the peptidase S33 family.

Its subcellular location is the cytoplasm. It carries out the reaction Release of N-terminal proline from a peptide.. In terms of biological role, specifically catalyzes the removal of N-terminal proline residues from peptides. This is Probable proline iminopeptidase from Streptomyces coelicolor (strain ATCC BAA-471 / A3(2) / M145).